The chain runs to 286 residues: Small ribosomal subunit protein uS2 (286 aa).

A disordered region spans residues 213-286 (EEQAQNNKWA…GAQEGGEWGS (74 aa)). Positions 227–241 (SPALSAAVPSSAAPV) are enriched in low complexity. Over residues 244-270 (WSSSPSKETTEWGASNTAAAAKSSWSN) the composition is skewed to polar residues. Residues 274–286 (GEWGAQEGGEWGS) are compositionally biased toward gly residues.

The protein belongs to the universal ribosomal protein uS2 family. Component of the small ribosomal subunit. Mature ribosomes consist of a small (40S) and a large (60S) subunit. The 40S subunit contains about 33 different proteins and 1 molecule of RNA (18S). The 60S subunit contains about 49 different proteins and 3 molecules of RNA (28S, 5.8S and 5S). Interacts with ribosomal protein S21.

It localises to the cytoplasm. Its function is as follows. Required for the assembly and/or stability of the 40S ribosomal subunit. Required for the processing of the 20S rRNA-precursor to mature 18S rRNA in a late step of the maturation of 40S ribosomal subunits. The chain is Small ribosomal subunit protein uS2 from Trichoplax adhaerens (Trichoplax reptans).